A 239-amino-acid chain; its full sequence is Purine nucleoside phosphorylase DeoD-type (239 aa).

H5 contributes to the a purine D-ribonucleoside binding site. Phosphate contacts are provided by residues G21, R25, R44, and 88-91 (RVGS). A purine D-ribonucleoside is bound by residues 180–182 (EME) and 204–205 (SD). Catalysis depends on D205, which acts as the Proton donor.

It belongs to the PNP/UDP phosphorylase family. As to quaternary structure, homohexamer; trimer of homodimers.

It carries out the reaction a purine D-ribonucleoside + phosphate = a purine nucleobase + alpha-D-ribose 1-phosphate. It catalyses the reaction a purine 2'-deoxy-D-ribonucleoside + phosphate = a purine nucleobase + 2-deoxy-alpha-D-ribose 1-phosphate. Catalyzes the reversible phosphorolytic breakdown of the N-glycosidic bond in the beta-(deoxy)ribonucleoside molecules, with the formation of the corresponding free purine bases and pentose-1-phosphate. This Salmonella heidelberg (strain SL476) protein is Purine nucleoside phosphorylase DeoD-type.